Reading from the N-terminus, the 367-residue chain is Peptide chain release factor 2 (367 aa).

Gln-249 is modified (N5-methylglutamine).

It belongs to the prokaryotic/mitochondrial release factor family. In terms of processing, methylated by PrmC. Methylation increases the termination efficiency of RF2.

It localises to the cytoplasm. In terms of biological role, peptide chain release factor 2 directs the termination of translation in response to the peptide chain termination codons UGA and UAA. The protein is Peptide chain release factor 2 of Pseudothermotoga lettingae (strain ATCC BAA-301 / DSM 14385 / NBRC 107922 / TMO) (Thermotoga lettingae).